The chain runs to 346 residues: Biotin synthase (346 aa).

One can recognise a Radical SAM core domain in the interval 38–256; the sequence is RQVQVSTLLS…IAVARIMMPT (219 aa). [4Fe-4S] cluster is bound by residues Cys-53, Cys-57, and Cys-60. 4 residues coordinate [2Fe-2S] cluster: Cys-97, Cys-128, Cys-188, and Arg-260.

Belongs to the radical SAM superfamily. Biotin synthase family. In terms of assembly, homodimer. It depends on [4Fe-4S] cluster as a cofactor. [2Fe-2S] cluster serves as cofactor.

It carries out the reaction (4R,5S)-dethiobiotin + (sulfur carrier)-SH + 2 reduced [2Fe-2S]-[ferredoxin] + 2 S-adenosyl-L-methionine = (sulfur carrier)-H + biotin + 2 5'-deoxyadenosine + 2 L-methionine + 2 oxidized [2Fe-2S]-[ferredoxin]. It participates in cofactor biosynthesis; biotin biosynthesis; biotin from 7,8-diaminononanoate: step 2/2. Functionally, catalyzes the conversion of dethiobiotin (DTB) to biotin by the insertion of a sulfur atom into dethiobiotin via a radical-based mechanism. The polypeptide is Biotin synthase (Escherichia fergusonii (strain ATCC 35469 / DSM 13698 / CCUG 18766 / IAM 14443 / JCM 21226 / LMG 7866 / NBRC 102419 / NCTC 12128 / CDC 0568-73)).